The chain runs to 94 residues: Integration host factor subunit beta (94 aa).

This sequence belongs to the bacterial histone-like protein family. As to quaternary structure, heterodimer of an alpha and a beta chain.

This protein is one of the two subunits of integration host factor, a specific DNA-binding protein that functions in genetic recombination as well as in transcriptional and translational control. This Roseobacter denitrificans (strain ATCC 33942 / OCh 114) (Erythrobacter sp. (strain OCh 114)) protein is Integration host factor subunit beta.